Reading from the N-terminus, the 427-residue chain is Homoprotocatechuate catabolism bifunctional isomerase/decarboxylase (427 aa).

2 Approximate repeats span residues 1–202 and 203–405; these read MKGT…LENP and VVDE…VGDE. 3 residues coordinate a divalent metal cation: Glu276, Glu278, and Asp307.

The protein belongs to the FAH family. In terms of assembly, monomer. Mg(2+) serves as cofactor.

It catalyses the reaction (2E,4Z)-5-hydroxypenta-2,4-diene-1,2,5-tricarboxylate = (3E,5R)-5-carboxy-2-oxohept-3-enedioate. The catalysed reaction is (3E,5R)-5-carboxy-2-oxohept-3-enedioate + H(+) = (4Z)-2-oxohept-4-enedioate + CO2. It functions in the pathway aromatic compound metabolism; 4-hydroxyphenylacetate degradation; pyruvate and succinate semialdehyde from 4-hydroxyphenylacetate: step 4/7. Its pathway is aromatic compound metabolism; 4-hydroxyphenylacetate degradation; pyruvate and succinate semialdehyde from 4-hydroxyphenylacetate: step 5/7. In terms of biological role, decarboxylates OPET (5-oxo-pent-3-ene-1,2,5-tricarboxylic acid) into HHDD (2-hydroxy-hept-2,4-diene-1,7-dioate) and isomerizes it to OHED (2-oxo-hept-3-ene-1,7-dioate). In Escherichia coli, this protein is Homoprotocatechuate catabolism bifunctional isomerase/decarboxylase (hpcE).